The chain runs to 537 residues: 2-isopropylmalate synthase (537 aa).

The 266-residue stretch at 8-273 (IIIFDTTLRD…FLGRPVDSME (266 aa)) folds into the Pyruvate carboxyltransferase domain. Mn(2+) is bound by residues aspartate 17, histidine 208, histidine 210, and asparagine 244. A regulatory domain region spans residues 408–537 (RLELVQVSCG…PSEPVLTSKN (130 aa)).

Belongs to the alpha-IPM synthase/homocitrate synthase family. LeuA type 1 subfamily. As to quaternary structure, homodimer. It depends on Mn(2+) as a cofactor.

Its subcellular location is the cytoplasm. The enzyme catalyses 3-methyl-2-oxobutanoate + acetyl-CoA + H2O = (2S)-2-isopropylmalate + CoA + H(+). It functions in the pathway amino-acid biosynthesis; L-leucine biosynthesis; L-leucine from 3-methyl-2-oxobutanoate: step 1/4. In terms of biological role, catalyzes the condensation of the acetyl group of acetyl-CoA with 3-methyl-2-oxobutanoate (2-ketoisovalerate) to form 3-carboxy-3-hydroxy-4-methylpentanoate (2-isopropylmalate). This Crocosphaera subtropica (strain ATCC 51142 / BH68) (Cyanothece sp. (strain ATCC 51142)) protein is 2-isopropylmalate synthase.